The sequence spans 878 residues: MSRVIVKGLPIYLKEDRLRDLIEKRLTQKHQSTDVQSYLSDVKLMKNRDGESRRFAFIGFRDEEDAFDCVNYFNGTFVDTSKIEVSMAKSFADPRVPQPMREKRREALKRLREREELLLADKKDSQKKQKSDSNNDGGKKHDIDAEIAKNKQLQEFINTMKPSSQVTSWETVQSSKTQGEDEEAADDEVGEMSSNPLLSQALALKGNSRDADEDTDMFKLPGNESDDEYVSLNGGSNNANTDEPEPQMMSLDTFDTAGPTSTDDMAKDEAVSDLDWLKNRRVRIKDGADTPVSKQQQQPDTEQQQPEETEVETSQESEEEKSLKKIRETGRLFLRNILYTATEDDFRKLFSPYGELEEVHIAVDTRTGQSKGFAYVLFKNADNAATAFVELDKQIFQGRLLHILPADAKKSHKLDEFDLKNLPLKKQRELKRKANSAQQTFSWNSLYMNQDAVLSSVADKLGMKKSELIDAENSSSAVKQALAEASVIGDVRKFFETRGVDLTKFAQLKNSERDDRVILVKNFPYGTTREEIAELFLPFGKLQRLLLPPSGTIAILQFRDVPAARAAFSKISYKRFKDGIIYLEKGPSDCFTRDAQGDELVESETDIQKATAKEAKISGADLLEAQSLPAADKDDHDDDDDDDDVQAGPTVSIFIKNLNFSTTSQQLTEKFKPFNGFVVAQVKTKPDPKQPGKTLSMGFGFAEFKTKEQANAVISAMEGTILDGHKLQLKLSHRQGTSTTNASSKKKKKNQGKIIVKNLPFEATRKDVFELFSSFGQLKSVRVPKKFDKSARGFAFVEFLLPKEAENAMDQLQGVHLLGRRLVMEFVEQDPEDVEQQIEKMTRKVKKQVNTTKIANMRNSGKRKIDLDEDDENDGLQG.

The RRM 1 domain occupies 2-90; the sequence is SRVIVKGLPI…SKIEVSMAKS (89 aa). Disordered regions lie at residues 118–143, 159–269, and 287–323; these read LLAD…KHDI, TMKP…AKDE, and GADT…EKSL. Positions 159–177 are enriched in polar residues; the sequence is TMKPSSQVTSWETVQSSKT. A compositionally biased stretch (acidic residues) spans 180 to 190; it reads EDEEAADDEVG. Positions 295-304 are enriched in low complexity; that stretch reads QQQQPDTEQQ. A compositionally biased stretch (acidic residues) spans 305–319; the sequence is QPEETEVETSQESEE. RRM domains follow at residues 330–408, 516–588, 651–734, and 752–829; these read GRLF…PADA, RVIL…KGPS, VSIF…LSHR, and GKII…FVEQ. The segment at 732–751 is disordered; the sequence is SHRQGTSTTNASSKKKKKNQ. Positions 852–878 are disordered; it reads TKIANMRNSGKRKIDLDEDDENDGLQG. Residues 867-878 are compositionally biased toward acidic residues; the sequence is LDEDDENDGLQG.

Belongs to the RRM MRD1 family.

The protein resides in the nucleus. Functionally, involved in pre-rRNA processing. The chain is Multiple RNA-binding domain-containing protein 1 (MRD1) from Kluyveromyces lactis (strain ATCC 8585 / CBS 2359 / DSM 70799 / NBRC 1267 / NRRL Y-1140 / WM37) (Yeast).